We begin with the raw amino-acid sequence, 384 residues long: Chaperone protein DnaJ (384 aa).

The region spanning 5–70 (DFYEVLGVSK…DKKAAYDRYG (66 aa)) is the J domain. The CR-type zinc finger occupies 143–221 (GAQKTITVPG…CHGSGRIEKE (79 aa)). The Zn(2+) site is built by Cys-156, Cys-159, Cys-173, Cys-176, Cys-195, Cys-198, Cys-209, and Cys-212. 4 CXXCXGXG motif repeats span residues 156–163 (CGSCNGTG), 173–180 (CPTCSGLG), 195–202 (CPTCGGQG), and 209–216 (CRVCHGSG).

Belongs to the DnaJ family. Homodimer. The cofactor is Zn(2+).

Its subcellular location is the cytoplasm. Functionally, participates actively in the response to hyperosmotic and heat shock by preventing the aggregation of stress-denatured proteins and by disaggregating proteins, also in an autonomous, DnaK-independent fashion. Unfolded proteins bind initially to DnaJ; upon interaction with the DnaJ-bound protein, DnaK hydrolyzes its bound ATP, resulting in the formation of a stable complex. GrpE releases ADP from DnaK; ATP binding to DnaK triggers the release of the substrate protein, thus completing the reaction cycle. Several rounds of ATP-dependent interactions between DnaJ, DnaK and GrpE are required for fully efficient folding. Also involved, together with DnaK and GrpE, in the DNA replication of plasmids through activation of initiation proteins. The sequence is that of Chaperone protein DnaJ from Rhodobacter capsulatus (Rhodopseudomonas capsulata).